The chain runs to 210 residues: Chloramphenicol acetyltransferase (210 aa).

The active site involves His-79.

It belongs to the transferase hexapeptide repeat family.

The catalysed reaction is chloramphenicol + acetyl-CoA = chloramphenicol 3-acetate + CoA. Functionally, this enzyme is an effector of chloramphenicol resistance in bacteria. The polypeptide is Chloramphenicol acetyltransferase (catB4) (Klebsiella aerogenes (Enterobacter aerogenes)).